Reading from the N-terminus, the 219-residue chain is Probable nicotinate-nucleotide adenylyltransferase (219 aa).

It belongs to the NadD family.

It carries out the reaction nicotinate beta-D-ribonucleotide + ATP + H(+) = deamido-NAD(+) + diphosphate. It participates in cofactor biosynthesis; NAD(+) biosynthesis; deamido-NAD(+) from nicotinate D-ribonucleotide: step 1/1. Functionally, catalyzes the reversible adenylation of nicotinate mononucleotide (NaMN) to nicotinic acid adenine dinucleotide (NaAD). The protein is Probable nicotinate-nucleotide adenylyltransferase of Pseudomonas entomophila (strain L48).